Here is a 1433-residue protein sequence, read N- to C-terminus: DNA-directed RNA polymerase subunit beta' (1433 aa).

Residues C66, C68, C81, and C84 each contribute to the Zn(2+) site. D474, D476, and D478 together coordinate Mg(2+). Zn(2+)-binding residues include C823, C897, C904, and C907.

The protein belongs to the RNA polymerase beta' chain family. In terms of assembly, the RNAP catalytic core consists of 2 alpha, 1 beta, 1 beta' and 1 omega subunit. When a sigma factor is associated with the core the holoenzyme is formed, which can initiate transcription. Requires Mg(2+) as cofactor. Zn(2+) is required as a cofactor.

The catalysed reaction is RNA(n) + a ribonucleoside 5'-triphosphate = RNA(n+1) + diphosphate. In terms of biological role, DNA-dependent RNA polymerase catalyzes the transcription of DNA into RNA using the four ribonucleoside triphosphates as substrates. This chain is DNA-directed RNA polymerase subunit beta', found in Amoebophilus asiaticus (strain 5a2).